Here is a 67-residue protein sequence, read N- to C-terminus: Conotoxin Cal6.35 (67 aa).

An N-terminal signal peptide occupies residues 1 to 22 (MKLTCVLIVAVLILTACQVIAA). 3 disulfide bridges follow: cysteine 43–cysteine 53, cysteine 46–cysteine 59, and cysteine 52–cysteine 66.

Belongs to the conotoxin O1 superfamily. As to expression, expressed by the venom duct.

Its subcellular location is the secreted. Functionally, probable neurotoxin. The polypeptide is Conotoxin Cal6.35 (Californiconus californicus (California cone)).